The sequence spans 259 residues: Protein unc-50 homolog (259 aa).

Met-1 carries the post-translational modification N-acetylmethionine. Residues 1–82 are Cytoplasmic-facing; that stretch reads MLPSTSLSSS…TKDQWARDDP (82 aa). Ser-6 bears the Phosphoserine mark. A helical membrane pass occupies residues 83–103; sequence AFLVLLSIWLCVSTIGFGFVL. Residues 104–112 lie on the Lumenal side of the membrane; sequence DMGFFETIK. Residues 113-133 form a helical membrane-spanning segment; that stretch reads LLLWVVFIDCVGVGLLISTLM. Residues 134–163 lie on the Cytoplasmic side of the membrane; the sequence is WFVSNKYLVKRQSRDYDVEWGYAFDVHLNA. The chain crosses the membrane as a helical span at residues 164–184; it reads FYPLLVILHFIQLFFINHVIL. The Lumenal segment spans residues 185–187; sequence TDT. The chain crosses the membrane as a helical span at residues 188–208; that stretch reads FIGYLVGNTLWLIAVGYYIYV. Over 209-222 the chain is Cytoplasmic; the sequence is TFLGYSALPFLKNT. A helical membrane pass occupies residues 223 to 243; sequence VILLYPFAPLMVLYGLSLALG. Residues 244–259 lie on the Lumenal side of the membrane; it reads WNFTHTLCSFYKYRVK.

This sequence belongs to the unc-50 family. As to expression, highly expressed in periodontal ligament and bone marrow, but not in gingival fibroblasts.

Its subcellular location is the nucleus inner membrane. It localises to the golgi apparatus membrane. Functionally, involved in the cell surface expression of neuronal nicotinic receptors. Binds RNA. The chain is Protein unc-50 homolog (Unc50) from Mus musculus (Mouse).